We begin with the raw amino-acid sequence, 1032 residues long: Kinesin heavy chain isoform 5A (1032 aa).

Position 2 is an N-acetylalanine (A2). Residues 9–327 enclose the Kinesin motor domain; that stretch reads SIKVLCRFRP…LMFGQRAKTI (319 aa). 86–93 contributes to the ATP binding site; sequence GQTSSGKT. The microtubule-binding stretch occupies residues 174–315; sequence VSSPEEILDV…PSSYNDAETK (142 aa). Residues 271-361 are necessary for interaction with ZFYVE27; sequence EGTKSYVPYR…KTKAQKETIA (91 aa). Positions 331–906 form a coiled coil; the sequence is ASVNLELTAE…VDRIKEAVRY (576 aa). An interaction with BICD2 region spans residues 353–1032; it reads TKAQKETIAK…FPLHQETAAS (680 aa). At T397 the chain carries Phosphothreonine. Disordered stretches follow at residues 906 to 939 and 978 to 1010; these read YKSSGKRGHSAQIAKPVRPGHYPASSPTNPYGTR and SGATSSGGPLASYQKANMDNGNATDINDNRSDL. The interval 907–1032 is globular; sequence KSSGKRGHSA…FPLHQETAAS (126 aa). Low complexity predominate over residues 978 to 989; the sequence is SGATSSGGPLAS. Polar residues predominate over residues 991 to 1003; sequence QKANMDNGNATDI.

The protein belongs to the TRAFAC class myosin-kinesin ATPase superfamily. Kinesin family. Kinesin subfamily. In terms of assembly, oligomer composed of two heavy chains and two light chains. Interacts with GRIP1. Interacts with FMR1 (via C-terminus); this interaction is increased in a mGluR-dependent manner. Interacts with ZFYVE27. Interacts with VAPA, VAPB, SURF4, RAB11A (GDP-bound form), RAB11B (GDP-bound form) and RTN3 in a ZFYVE27-dependent manner. Interacts with BORCS5. Interacts with BICD2. Interacts with DTNB. As to expression, distributed throughout the CNS but is highly enriched in subsets of neurons.

It is found in the cytoplasm. Its subcellular location is the perinuclear region. The protein resides in the cytoskeleton. It localises to the perikaryon. The enzyme catalyses ATP + H2O + a kinesin associated with a microtubule at position (n) = ADP + phosphate a kinesin associated with a microtubule at position (n+1, toward the plus end).. In terms of biological role, microtubule-dependent motor required for slow axonal transport of neurofilament proteins (NFH, NFM and NFL). Can induce formation of neurite-like membrane protrusions in non-neuronal cells in a ZFYVE27-dependent manner. The ZFYVE27-KIF5A complex contributes to the vesicular transport of VAPA, VAPB, SURF4, RAB11A, RAB11B and RTN3 proteins in neurons. Required for anterograde axonal transportation of MAPK8IP3/JIP3 which is essential for MAPK8IP3/JIP3 function in axon elongation. The protein is Kinesin heavy chain isoform 5A of Homo sapiens (Human).